Consider the following 358-residue polypeptide: Histidinol-phosphate aminotransferase (358 aa).

The residue at position 210 (lysine 210) is an N6-(pyridoxal phosphate)lysine.

It belongs to the class-II pyridoxal-phosphate-dependent aminotransferase family. Histidinol-phosphate aminotransferase subfamily. In terms of assembly, homodimer. It depends on pyridoxal 5'-phosphate as a cofactor.

It carries out the reaction L-histidinol phosphate + 2-oxoglutarate = 3-(imidazol-4-yl)-2-oxopropyl phosphate + L-glutamate. The protein operates within amino-acid biosynthesis; L-histidine biosynthesis; L-histidine from 5-phospho-alpha-D-ribose 1-diphosphate: step 7/9. The protein is Histidinol-phosphate aminotransferase of Clostridium beijerinckii (strain ATCC 51743 / NCIMB 8052) (Clostridium acetobutylicum).